The sequence spans 304 residues: Acetylglutamate kinase (304 aa).

Substrate is bound by residues 71-72 (GG), arginine 93, and asparagine 193.

Belongs to the acetylglutamate kinase family. ArgB subfamily.

Its subcellular location is the cytoplasm. It carries out the reaction N-acetyl-L-glutamate + ATP = N-acetyl-L-glutamyl 5-phosphate + ADP. Its pathway is amino-acid biosynthesis; L-arginine biosynthesis; N(2)-acetyl-L-ornithine from L-glutamate: step 2/4. In terms of biological role, catalyzes the ATP-dependent phosphorylation of N-acetyl-L-glutamate. The sequence is that of Acetylglutamate kinase from Streptomyces avermitilis (strain ATCC 31267 / DSM 46492 / JCM 5070 / NBRC 14893 / NCIMB 12804 / NRRL 8165 / MA-4680).